The primary structure comprises 290 residues: Elongation factor Ts (290 aa).

Residues 80–83 are involved in Mg(2+) ion dislocation from EF-Tu; sequence TDFV.

The protein belongs to the EF-Ts family.

It localises to the cytoplasm. Functionally, associates with the EF-Tu.GDP complex and induces the exchange of GDP to GTP. It remains bound to the aminoacyl-tRNA.EF-Tu.GTP complex up to the GTP hydrolysis stage on the ribosome. This is Elongation factor Ts from Neorickettsia sennetsu (strain ATCC VR-367 / Miyayama) (Ehrlichia sennetsu).